We begin with the raw amino-acid sequence, 208 residues long: Orotidine 5'-phosphate decarboxylase (208 aa).

Residues aspartate 7, lysine 29, 57-66 (DLKLADIPNT), serine 109, 162-172 (PGIGAQGGKAK), glycine 185, and arginine 186 contribute to the substrate site. Lysine 59 (proton donor) is an active-site residue.

This sequence belongs to the OMP decarboxylase family. Type 1 subfamily. In terms of assembly, homodimer.

The catalysed reaction is orotidine 5'-phosphate + H(+) = UMP + CO2. It participates in pyrimidine metabolism; UMP biosynthesis via de novo pathway; UMP from orotate: step 2/2. Functionally, catalyzes the decarboxylation of orotidine 5'-monophosphate (OMP) to uridine 5'-monophosphate (UMP). This Pyrococcus abyssi (strain GE5 / Orsay) protein is Orotidine 5'-phosphate decarboxylase.